The following is a 122-amino-acid chain: Small ribosomal subunit protein bS16 (122 aa).

Positions 87–122 are disordered; the sequence is VGKAKQAEARKAGAKNVAKQAAEAKAEETPADNTEA.

This sequence belongs to the bacterial ribosomal protein bS16 family.

The polypeptide is Small ribosomal subunit protein bS16 (Prochlorococcus marinus (strain MIT 9303)).